We begin with the raw amino-acid sequence, 147 residues long: Diuretic hormone 45 (147 aa).

Residues 1–26 (MMWWAVWCAAMVAGSVFTAAAPPTDS) form the signal peptide. Positions 27–84 (IDLMQMDPSLADDESLGFAMQSLSGRYAAAPWLYLLADVSHDPQRMAEFSQSSGRARP) are excised as a propeptide. Residue valine 131 is modified to Valine amide. Positions 135–147 (GAWGEPASYLYNN) are excised as a propeptide.

Belongs to the sauvagine/corticotropin-releasing factor/urotensin I family.

The protein localises to the secreted. Functionally, regulation of fluid secretion. In Bombyx mori (Silk moth), this protein is Diuretic hormone 45 (dh45).